The primary structure comprises 204 residues: Large ribosomal subunit protein eL15 (204 aa).

The protein belongs to the eukaryotic ribosomal protein eL15 family.

The chain is Large ribosomal subunit protein eL15 (RPL15) from Tetrahymena thermophila (strain SB210).